A 379-amino-acid polypeptide reads, in one-letter code: tRNA 2-selenouridine synthase (379 aa).

Positions 15 to 138 (FQQNIPLMDV…ARNYLIKQIE (124 aa)) constitute a Rhodanese domain. The active-site S-selanylcysteine intermediate is the C98.

The protein belongs to the SelU family. In terms of assembly, monomer.

It catalyses the reaction 5-methylaminomethyl-2-thiouridine(34) in tRNA + selenophosphate + (2E)-geranyl diphosphate + H2O + H(+) = 5-methylaminomethyl-2-selenouridine(34) in tRNA + (2E)-thiogeraniol + phosphate + diphosphate. The enzyme catalyses 5-methylaminomethyl-2-thiouridine(34) in tRNA + (2E)-geranyl diphosphate = 5-methylaminomethyl-S-(2E)-geranyl-thiouridine(34) in tRNA + diphosphate. The catalysed reaction is 5-methylaminomethyl-S-(2E)-geranyl-thiouridine(34) in tRNA + selenophosphate + H(+) = 5-methylaminomethyl-2-(Se-phospho)selenouridine(34) in tRNA + (2E)-thiogeraniol. It carries out the reaction 5-methylaminomethyl-2-(Se-phospho)selenouridine(34) in tRNA + H2O = 5-methylaminomethyl-2-selenouridine(34) in tRNA + phosphate. In terms of biological role, involved in the post-transcriptional modification of the uridine at the wobble position (U34) of tRNA(Lys), tRNA(Glu) and tRNA(Gln). Catalyzes the conversion of 2-thiouridine (S2U-RNA) to 2-selenouridine (Se2U-RNA). Acts in a two-step process involving geranylation of 2-thiouridine (S2U) to S-geranyl-2-thiouridine (geS2U) and subsequent selenation of the latter derivative to 2-selenouridine (Se2U) in the tRNA chain. This is tRNA 2-selenouridine synthase from Bdellovibrio bacteriovorus (strain ATCC 15356 / DSM 50701 / NCIMB 9529 / HD100).